Here is a 380-residue protein sequence, read N- to C-terminus: tRNA-specific 2-thiouridylase MnmA (380 aa).

ATP-binding positions include 10 to 17 and Leu-36; that span reads AMSGGVDS. Cys-106 (nucleophile) is an active-site residue. Residues Cys-106 and Cys-202 are joined by a disulfide bond. Gly-130 serves as a coordination point for ATP. The segment at 152 to 154 is interaction with tRNA; the sequence is KNQ. The active-site Cysteine persulfide intermediate is Cys-202. The segment at 308 to 309 is interaction with tRNA; the sequence is RY.

Belongs to the MnmA/TRMU family.

The protein localises to the cytoplasm. It carries out the reaction S-sulfanyl-L-cysteinyl-[protein] + uridine(34) in tRNA + AH2 + ATP = 2-thiouridine(34) in tRNA + L-cysteinyl-[protein] + A + AMP + diphosphate + H(+). In terms of biological role, catalyzes the 2-thiolation of uridine at the wobble position (U34) of tRNA, leading to the formation of s(2)U34. This is tRNA-specific 2-thiouridylase MnmA from Leptospira biflexa serovar Patoc (strain Patoc 1 / Ames).